The following is an 89-amino-acid chain: Small ribosomal subunit protein uS15 (89 aa).

Belongs to the universal ribosomal protein uS15 family. In terms of assembly, part of the 30S ribosomal subunit. Forms a bridge to the 50S subunit in the 70S ribosome, contacting the 23S rRNA.

Its function is as follows. One of the primary rRNA binding proteins, it binds directly to 16S rRNA where it helps nucleate assembly of the platform of the 30S subunit by binding and bridging several RNA helices of the 16S rRNA. Functionally, forms an intersubunit bridge (bridge B4) with the 23S rRNA of the 50S subunit in the ribosome. This chain is Small ribosomal subunit protein uS15, found in Bacteroides fragilis (strain ATCC 25285 / DSM 2151 / CCUG 4856 / JCM 11019 / LMG 10263 / NCTC 9343 / Onslow / VPI 2553 / EN-2).